The primary structure comprises 68 residues: Sec-independent protein translocase protein TatA (68 aa).

Residues 1–21 form a helical membrane-spanning segment; it reads MGSFSIWHWLIVLAVVLLLFG. The tract at residues 48 to 68 is disordered; sequence AAAADKSIDGKTVDHKSDEVR. Residues 53 to 68 show a composition bias toward basic and acidic residues; that stretch reads KSIDGKTVDHKSDEVR.

It belongs to the TatA/E family. As to quaternary structure, the Tat system comprises two distinct complexes: a TatABC complex, containing multiple copies of TatA, TatB and TatC subunits, and a separate TatA complex, containing only TatA subunits. Substrates initially bind to the TatABC complex, which probably triggers association of the separate TatA complex to form the active translocon.

It is found in the cell inner membrane. Its function is as follows. Part of the twin-arginine translocation (Tat) system that transports large folded proteins containing a characteristic twin-arginine motif in their signal peptide across membranes. TatA could form the protein-conducting channel of the Tat system. The sequence is that of Sec-independent protein translocase protein TatA from Sinorhizobium medicae (strain WSM419) (Ensifer medicae).